A 217-amino-acid polypeptide reads, in one-letter code: Probable GTP-binding protein EngB (217 aa).

One can recognise an EngB-type G domain in the interval 31–205 (VGVEIAFAGR…LAILDAWCHP (175 aa)). Residues 39–46 (GRSNAGKS), 66–70 (GRTQL), 84–87 (DLPG), 151–154 (TKAD), and 184–186 (FSA) contribute to the GTP site. The Mg(2+) site is built by Ser-46 and Thr-68.

The protein belongs to the TRAFAC class TrmE-Era-EngA-EngB-Septin-like GTPase superfamily. EngB GTPase family. The cofactor is Mg(2+).

Necessary for normal cell division and for the maintenance of normal septation. The polypeptide is Probable GTP-binding protein EngB (Shewanella amazonensis (strain ATCC BAA-1098 / SB2B)).